A 268-amino-acid chain; its full sequence is 3-deoxy-manno-octulosonate cytidylyltransferase (268 aa).

It belongs to the KdsB family.

The protein localises to the cytoplasm. It catalyses the reaction 3-deoxy-alpha-D-manno-oct-2-ulosonate + CTP = CMP-3-deoxy-beta-D-manno-octulosonate + diphosphate. The protein operates within nucleotide-sugar biosynthesis; CMP-3-deoxy-D-manno-octulosonate biosynthesis; CMP-3-deoxy-D-manno-octulosonate from 3-deoxy-D-manno-octulosonate and CTP: step 1/1. Its pathway is bacterial outer membrane biogenesis; lipopolysaccharide biosynthesis. Activates KDO (a required 8-carbon sugar) for incorporation into bacterial lipopolysaccharide in Gram-negative bacteria. The sequence is that of 3-deoxy-manno-octulosonate cytidylyltransferase from Psychrobacter arcticus (strain DSM 17307 / VKM B-2377 / 273-4).